Here is a 351-residue protein sequence, read N- to C-terminus: Histidinol-phosphate aminotransferase 1 (351 aa).

The residue at position 210 (lysine 210) is an N6-(pyridoxal phosphate)lysine.

Belongs to the class-II pyridoxal-phosphate-dependent aminotransferase family. Histidinol-phosphate aminotransferase subfamily. As to quaternary structure, homodimer. Requires pyridoxal 5'-phosphate as cofactor.

The catalysed reaction is L-histidinol phosphate + 2-oxoglutarate = 3-(imidazol-4-yl)-2-oxopropyl phosphate + L-glutamate. It participates in amino-acid biosynthesis; L-histidine biosynthesis; L-histidine from 5-phospho-alpha-D-ribose 1-diphosphate: step 7/9. The polypeptide is Histidinol-phosphate aminotransferase 1 (hisC1) (Pasteurella multocida (strain Pm70)).